A 390-amino-acid polypeptide reads, in one-letter code: 3,5-dihydroxybiphenyl synthase (390 aa).

Cys-161 is a catalytic residue.

Belongs to the thiolase-like superfamily. Chalcone/stilbene synthases family. Homodimer.

It catalyses the reaction benzoyl-CoA + 3 malonyl-CoA + 3 H(+) = biphenyl-3,5-diol + 4 CO2 + 4 CoA. Functionally, type III polyketide synthase involved in the biosynthesis of the phytoalexins bisphenyls and dibenzofurans. Can also use salicoyl-CoA and malonyl-CoA to produce a diketide intermediate yielding 4-hydroxycoumarin after cyclization and enolization. Can also use m-hydroxybenzoyl-CoA as substrate, producing m-hydroxybenzoyl diacetic acid lactone as a derailment product. No activity with p-hydroxybenzoyl-CoA, CoA-linked cinnamic acids or acetyl-CoA. This is 3,5-dihydroxybiphenyl synthase (BIS1) from Sorbus aucuparia (European mountain ash).